Consider the following 461-residue polypeptide: Elongation factor 1-alpha (461 aa).

Residue Gly-2 is modified to N,N,N-trimethylglycine. Residues 5-242 (KIHINIVVIG…DAILPPSRPT (238 aa)) form the tr-type G domain. The segment at 14–21 (GHVDSGKS) is G1. 14-21 (GHVDSGKS) serves as a coordination point for GTP. The segment at 70–74 (GITID) is G2. The tract at residues 91 to 94 (DAPG) is G3. GTP-binding positions include 153-156 (NKMD) and 194-196 (SGW). Residues 153-156 (NKMD) form a G4 region. The G5 stretch occupies residues 194-196 (SGW). Residues Glu-301 and Glu-374 each carry the 5-glutamyl glycerylphosphorylethanolamine modification.

Belongs to the TRAFAC class translation factor GTPase superfamily. Classic translation factor GTPase family. EF-Tu/EF-1A subfamily.

It is found in the cytoplasm. It carries out the reaction GTP + H2O = GDP + phosphate + H(+). Its function is as follows. Translation elongation factor that catalyzes the GTP-dependent binding of aminoacyl-tRNA (aa-tRNA) to the A-site of ribosomes during the elongation phase of protein synthesis. Base pairing between the mRNA codon and the aa-tRNA anticodon promotes GTP hydrolysis, releasing the aa-tRNA from EEF1A1 and allowing its accommodation into the ribosome. The growing protein chain is subsequently transferred from the P-site peptidyl tRNA to the A-site aa-tRNA, extending it by one amino acid through ribosome-catalyzed peptide bond formation. The polypeptide is Elongation factor 1-alpha (eef1a) (Oryzias latipes (Japanese rice fish)).